Consider the following 179-residue polypeptide: Protein LDB18 (179 aa).

May be involved in protein-linked oligosaccharide phosphorylation since the deletion reduces the negative charge of the cell surface. This chain is Protein LDB18 (LDB18), found in Saccharomyces cerevisiae (strain ATCC 204508 / S288c) (Baker's yeast).